Here is a 201-residue protein sequence, read N- to C-terminus: Prostamide/prostaglandin F synthase (201 aa).

The protein belongs to the peroxiredoxin-like PRXL2 family. Prostamide/prostaglandin F synthase subfamily.

The protein resides in the cytoplasm. It is found in the cytosol. The enzyme catalyses prostaglandin H2 + [thioredoxin]-dithiol = prostaglandin F2alpha + [thioredoxin]-disulfide. It catalyses the reaction prostamide F2alpha + [thioredoxin]-disulfide = prostamide H2 + [thioredoxin]-dithiol. Functionally, catalyzes the reduction of prostaglandin-ethanolamide H(2) (prostamide H(2)) to prostamide F(2alpha) with NADPH as proton donor. Also able to reduce prostaglandin H(2) to prostaglandin F(2alpha). The sequence is that of Prostamide/prostaglandin F synthase (prxl2b) from Aquarana catesbeiana (American bullfrog).